The sequence spans 368 residues: 3-dehydroquinate synthase (368 aa).

NAD(+) is bound by residues 69–74, 103–107, 127–128, K140, and K149; these read DGEAYK, GVIGD, and TT. Residues E182, H245, and H262 each coordinate Zn(2+).

It belongs to the sugar phosphate cyclases superfamily. Dehydroquinate synthase family. The cofactor is Co(2+). Requires Zn(2+) as cofactor. It depends on NAD(+) as a cofactor.

The protein resides in the cytoplasm. The enzyme catalyses 7-phospho-2-dehydro-3-deoxy-D-arabino-heptonate = 3-dehydroquinate + phosphate. It participates in metabolic intermediate biosynthesis; chorismate biosynthesis; chorismate from D-erythrose 4-phosphate and phosphoenolpyruvate: step 2/7. Catalyzes the conversion of 3-deoxy-D-arabino-heptulosonate 7-phosphate (DAHP) to dehydroquinate (DHQ). In Pseudomonas aeruginosa (strain UCBPP-PA14), this protein is 3-dehydroquinate synthase.